A 569-amino-acid polypeptide reads, in one-letter code: Santalene synthase (569 aa).

(2E)-geranyl diphosphate-binding residues include Arg284, Asp321, Asp325, and Arg460. Asp321 and Asp325 together coordinate Mg(2+). The DDXXD motif signature appears at 321 to 325; sequence DDAYD. Mg(2+)-binding residues include Asn463, Thr467, and Glu471.

Belongs to the terpene synthase family. Tpsb subfamily. Mg(2+) serves as cofactor. Requires Mn(2+) as cofactor.

It catalyses the reaction (2E,6E)-farnesyl diphosphate = (1S,5S,6R)-alpha-bergamotene + diphosphate. The catalysed reaction is (2E,6E)-farnesyl diphosphate = (+)-alpha-santalene + diphosphate. The enzyme catalyses (2E,6E)-farnesyl diphosphate = (-)-beta-santalene + diphosphate. In terms of biological role, catalyzes a mixture of sesquiterpenoids from (2E,6E)-farnesyl diphosphate in fragrance biosynthesis. Catalyzes the formation of alpha-santalene, beta-santalene, epi-beta-santalene and exo-alpha-bergamotene, as well as traces of alpha-farnesene and beta-farnesene. The sequence is that of Santalene synthase from Santalum austrocaledonicum (Sandalwood).